The chain runs to 356 residues: Dual-specificity RNA methyltransferase RlmN (356 aa).

The active-site Proton acceptor is the glutamate 89. The Radical SAM core domain occupies 108 to 341 (SHARYTICVS…CTIRESKGLD (234 aa)). The cysteines at positions 115 and 346 are disulfide-linked. [4Fe-4S] cluster-binding residues include cysteine 122, cysteine 126, and cysteine 129. S-adenosyl-L-methionine-binding positions include 172-173 (GE), serine 204, 227-229 (SLH), and asparagine 303. Catalysis depends on cysteine 346, which acts as the S-methylcysteine intermediate.

This sequence belongs to the radical SAM superfamily. RlmN family. Requires [4Fe-4S] cluster as cofactor.

Its subcellular location is the cytoplasm. The enzyme catalyses adenosine(2503) in 23S rRNA + 2 reduced [2Fe-2S]-[ferredoxin] + 2 S-adenosyl-L-methionine = 2-methyladenosine(2503) in 23S rRNA + 5'-deoxyadenosine + L-methionine + 2 oxidized [2Fe-2S]-[ferredoxin] + S-adenosyl-L-homocysteine. The catalysed reaction is adenosine(37) in tRNA + 2 reduced [2Fe-2S]-[ferredoxin] + 2 S-adenosyl-L-methionine = 2-methyladenosine(37) in tRNA + 5'-deoxyadenosine + L-methionine + 2 oxidized [2Fe-2S]-[ferredoxin] + S-adenosyl-L-homocysteine. Its function is as follows. Specifically methylates position 2 of adenine 2503 in 23S rRNA and position 2 of adenine 37 in tRNAs. m2A2503 modification seems to play a crucial role in the proofreading step occurring at the peptidyl transferase center and thus would serve to optimize ribosomal fidelity. The protein is Dual-specificity RNA methyltransferase RlmN of Campylobacter jejuni subsp. jejuni serotype O:23/36 (strain 81-176).